A 298-amino-acid chain; its full sequence is Small ribosomal subunit biogenesis GTPase RsgA (298 aa).

A CP-type G domain is found at 67 to 228; it reads TNELVRPPIS…IADTPGFSSL (162 aa). Residues 116–119 and 171–179 contribute to the GTP site; these read TKMD and GQSGVGKSS. Residues Cys-252, Cys-257, His-259, and Cys-265 each coordinate Zn(2+).

Belongs to the TRAFAC class YlqF/YawG GTPase family. RsgA subfamily. As to quaternary structure, monomer. Associates with 30S ribosomal subunit, binds 16S rRNA. Requires Zn(2+) as cofactor.

It is found in the cytoplasm. In terms of biological role, one of several proteins that assist in the late maturation steps of the functional core of the 30S ribosomal subunit. Helps release RbfA from mature subunits. May play a role in the assembly of ribosomal proteins into the subunit. Circularly permuted GTPase that catalyzes slow GTP hydrolysis, GTPase activity is stimulated by the 30S ribosomal subunit. The sequence is that of Small ribosomal subunit biogenesis GTPase RsgA from Bacillus pumilus (strain SAFR-032).